Here is a 453-residue protein sequence, read N- to C-terminus: Alpha-2B adrenergic receptor (453 aa).

Over 1–17 (MSGPTMDHQEPYSVQAT) the chain is Extracellular. Residues 18 to 42 (AAIASAITFLILFTIFGNALVILAV) form a helical membrane-spanning segment. At 43–54 (LTSRSLRAPQNL) the chain is on the cytoplasmic side. A helical transmembrane segment spans residues 55–80 (FLVSLAAADILVATLIIPFSLANELL). Topologically, residues 81–90 (GYWYFWRAWC) are extracellular. Cys-90 and Cys-169 form a disulfide bridge. A helical membrane pass occupies residues 91 to 113 (EVYLALDVLFCTSSIVHLCAISL). Residues 114-135 (DRYWAVSRALEYNSKRTPRRIK) are Cytoplasmic-facing. A helical membrane pass occupies residues 136–158 (CIILTVWLIAAVISLPPLIYKGD). Over 159–174 (QRPEPRGLPQCELNQE) the chain is Extracellular. A helical membrane pass occupies residues 175-198 (AWYILASSIGSFFAPCLIMILVYL). The Cytoplasmic portion of the chain corresponds to 199 to 375 (RIYVIAKRSH…LSREKRFTFV (177 aa)). The interval 213–331 (GAKRGSGEGE…PASVCNPPLQ (119 aa)) is disordered. A compositionally biased stretch (polar residues) spans 287 to 297 (GQGQKKGTSGA). Acidic residues predominate over residues 300–314 (EEGDEEDEEEVEECE). A helical transmembrane segment spans residues 376–399 (LAVVIGVFVVCWFPFFFSYSLGAI). Over 400-408 (CPQHCKVPH) the chain is Extracellular. A helical membrane pass occupies residues 409-432 (GLFQFFFWIGYCNSSLNPVIYTVF). Residues 433 to 453 (NQDFRRAFRRILCRPWTQTGW) lie on the Cytoplasmic side of the membrane. Residue Cys-445 is the site of S-palmitoyl cysteine attachment.

Belongs to the G-protein coupled receptor 1 family. Adrenergic receptor subfamily. ADRA2B sub-subfamily. As to quaternary structure, interacts with RAB26. Interacts with PPP1R9B. Interacts with GGA1, GGA2 and GGA3.

It localises to the cell membrane. Alpha-2 adrenergic receptors mediate the catecholamine-induced inhibition of adenylate cyclase through the action of G proteins. This chain is Alpha-2B adrenergic receptor (Adra2b), found in Rattus norvegicus (Rat).